The chain runs to 325 residues: ATP phosphoribosyltransferase (325 aa).

This sequence belongs to the ATP phosphoribosyltransferase family. Long subfamily. The cofactor is Mg(2+).

It is found in the cytoplasm. It carries out the reaction 1-(5-phospho-beta-D-ribosyl)-ATP + diphosphate = 5-phospho-alpha-D-ribose 1-diphosphate + ATP. The protein operates within amino-acid biosynthesis; L-histidine biosynthesis; L-histidine from 5-phospho-alpha-D-ribose 1-diphosphate: step 1/9. Its activity is regulated as follows. Feedback inhibited by histidine. In terms of biological role, catalyzes the condensation of ATP and 5-phosphoribose 1-diphosphate to form N'-(5'-phosphoribosyl)-ATP (PR-ATP). Has a crucial role in the pathway because the rate of histidine biosynthesis seems to be controlled primarily by regulation of HisG enzymatic activity. The chain is ATP phosphoribosyltransferase from Afipia carboxidovorans (strain ATCC 49405 / DSM 1227 / KCTC 32145 / OM5) (Oligotropha carboxidovorans).